The following is a 125-amino-acid chain: MRHRNSGVKLGRTSSHRKAMFQNLANSLFEHELIKTTVPKAKELRRVAEPLITLAKNDTVANRRLAFARTRSAATVGKLFTVLGPRYKERNGGYLRVLKAGFRAGDAAPMAYVELVDREVNTSAE.

This sequence belongs to the bacterial ribosomal protein bL17 family. In terms of assembly, part of the 50S ribosomal subunit. Contacts protein L32.

This Acinetobacter baylyi (strain ATCC 33305 / BD413 / ADP1) protein is Large ribosomal subunit protein bL17.